A 560-amino-acid chain; its full sequence is Endogenous retrovirus group K member 18 Env polyprotein (560 aa).

The interval 355–375 (FIFTLIAVIMGLIAVTATAAV) is fusion peptide. The helical transmembrane segment at 522–542 (IRSTMIINLILIVVCLFCLLL) threads the bilayer.

It belongs to the beta type-B retroviral envelope protein family. HERV class-II K(HML-2) env subfamily. In terms of assembly, the surface (SU) and transmembrane (TM) proteins form a heterodimer. SU and TM are attached by noncovalent interactions or by a labile interchain disulfide bond. Specific enzymatic cleavages in vivo yield the mature SU and TM proteins. Expressed at higher level in the thymus. Expressed at lower level in peripheral blood lymphocytes.

It localises to the cell membrane. The protein resides in the virion. In terms of biological role, retroviral envelope proteins mediate receptor recognition and membrane fusion during early infection. Endogenous envelope proteins may have kept, lost or modified their original function during evolution. This envelope protein has superantigenic properties. Functionally, SU mediates receptor recognition. Its function is as follows. TM anchors the envelope heterodimer to the viral membrane through one transmembrane domain. The other hydrophobic domain, called fusion peptide, mediates fusion of the viral membrane with the target cell membrane. This chain is Endogenous retrovirus group K member 18 Env polyprotein (ERVK-18), found in Homo sapiens (Human).